Consider the following 355-residue polypeptide: Peptide chain release factor 1 (355 aa).

Residue glutamine 233 is modified to N5-methylglutamine.

The protein belongs to the prokaryotic/mitochondrial release factor family. Post-translationally, methylated by PrmC. Methylation increases the termination efficiency of RF1.

It localises to the cytoplasm. Peptide chain release factor 1 directs the termination of translation in response to the peptide chain termination codons UAG and UAA. The sequence is that of Peptide chain release factor 1 from Clostridium tetani (strain Massachusetts / E88).